A 984-amino-acid chain; its full sequence is Probable serine/threonine-protein kinase ireA (984 aa).

Residues 1-26 form the signal peptide; it reads MTFSKTRNKIIFLLFLIIINIFNINA. The Extracellular portion of the chain corresponds to 27 to 436; the sequence is YIKDENEDDL…NDLLDSNKLK (410 aa). 2 disordered regions span residues 70–91 and 137–157; these read YSTSQFDRKQQQSTSTSTEITK and EDKSSTSSTSTTSESSKDENK. Low complexity-rich tracts occupy residues 82-91 and 141-150; these read STSTSTEITK and STSSTSTTSE. Asparagine 228 is a glycosylation site (N-linked (GlcNAc...) asparagine). The interval 352 to 427 is disordered; that stretch reads SPPSNNNNNN…GANNNNNNNN (76 aa). Over residues 356–397 the composition is skewed to low complexity; that stretch reads NNNNNNNNNNNNNNNNNNNNNNNNNNNNNNNNNNKNNNNNNK. Asparagine 398 is a glycosylation site (N-linked (GlcNAc...) asparagine). The chain crosses the membrane as a helical span at residues 437-457; the sequence is NYDIYLYSSIVILITSIIVFI. Over 458–984 the chain is Cytoplasmic; it reads RSKKNFNLIN…NDQYFVQYYY (527 aa). The stretch at 467–533 forms a coiled coil; the sequence is NVNNNNNQNN…NDLIDEFIST (67 aa). The segment covering 472 to 489 has biased composition (low complexity); that stretch reads NNQNNNQNSNQNNNINNK. Residues 472–518 are disordered; it reads NNQNNNQNSNQNNNINNKKTPKKKKKKQKNKNNKNNNDEDDENEIEN. The segment covering 490–503 has biased composition (basic residues); that stretch reads KTPKKKKKKQKNKN. The segment covering 509–518 has biased composition (acidic residues); that stretch reads DEDDENEIEN. The 277-residue stretch at 575–851 folds into the Protein kinase domain; that stretch reads IITNKILGTG…IGECINHPFF (277 aa). Residues 581–589 and lysine 603 contribute to the ATP site; that span reads LGTGSCGTI. A compositionally biased stretch (polar residues) spans 667–676; the sequence is PTDSPSIQSS. The disordered stretch occupies residues 667–692; sequence PTDSPSIQSSNNNGNGNNGNNNNNNQ. Positions 677–691 are enriched in low complexity; sequence NNNGNGNNGNNNNNN. Aspartate 722 acts as the Proton acceptor in catalysis. The 131-residue stretch at 854–984 folds into the KEN domain; the sequence is VHKKLSFLVA…NDQYFVQYYY (131 aa).

The protein belongs to the protein kinase superfamily. Ser/Thr protein kinase family.

The protein resides in the membrane. It catalyses the reaction L-seryl-[protein] + ATP = O-phospho-L-seryl-[protein] + ADP + H(+). The catalysed reaction is L-threonyl-[protein] + ATP = O-phospho-L-threonyl-[protein] + ADP + H(+). In Dictyostelium discoideum (Social amoeba), this protein is Probable serine/threonine-protein kinase ireA (ireA).